The sequence spans 166 residues: MAEEEEAKTEANGQQQAPQMRVLGQFIRDMSFENIMAQKGAPSDAQPDVQVQVNLDAKKRTADNQYESAIKLNVTSKVKDGDATLFVLELDYVGIFHVDNVPDEQLHPFLLIECPRMIFPFLRRIVSDITRDGGFPPLNLENIDFLSLYRNELARRQSSEAPKMDA.

It belongs to the SecB family. As to quaternary structure, homotetramer, a dimer of dimers. One homotetramer interacts with 1 SecA dimer.

It is found in the cytoplasm. Functionally, one of the proteins required for the normal export of preproteins out of the cell cytoplasm. It is a molecular chaperone that binds to a subset of precursor proteins, maintaining them in a translocation-competent state. It also specifically binds to its receptor SecA. The protein is Protein-export protein SecB of Roseobacter denitrificans (strain ATCC 33942 / OCh 114) (Erythrobacter sp. (strain OCh 114)).